A 378-amino-acid chain; its full sequence is MSVSAKETQRHPARPEPRPGVLAISAYVPGKSHAAGVEKVFKLSSNETPLGPSPKAIAAFQSAGTNLQDYPDGSSTALREAIGKAMGIDPDRIICGAGSDEILNLIAHAYVGPGDEAIHCAHGFLVYKIATLGAGGVPVVVPDREDLQMDVDAIIGAVTERTRVIFLANPNNPTGTYLPFNEVRRLHAALPPNVLLVLDAAYSEYVRRNDYETGLELALSAENVIMCRTFSKIHGLAALRIGWAVASEAVIDALNRIRGPFNMNAPAIAAGAAAILDAEHVERSIAHNDQWLSWLTTELTALGLTVTPSVGNFVLIHFPKTPGRTAAEADAFLTRRGLILRAVASYGLPDSLRMTIGTEEANRLVVQALSDFLSGAER.

The tract at residues Met-1–Gly-20 is disordered. Residues Glu-7–Pro-17 show a composition bias toward basic and acidic residues. The residue at position 232 (Lys-232) is an N6-(pyridoxal phosphate)lysine.

Belongs to the class-II pyridoxal-phosphate-dependent aminotransferase family. Histidinol-phosphate aminotransferase subfamily. Homodimer. Pyridoxal 5'-phosphate serves as cofactor.

The enzyme catalyses L-histidinol phosphate + 2-oxoglutarate = 3-(imidazol-4-yl)-2-oxopropyl phosphate + L-glutamate. Its pathway is amino-acid biosynthesis; L-histidine biosynthesis; L-histidine from 5-phospho-alpha-D-ribose 1-diphosphate: step 7/9. The polypeptide is Histidinol-phosphate aminotransferase (Azorhizobium caulinodans (strain ATCC 43989 / DSM 5975 / JCM 20966 / LMG 6465 / NBRC 14845 / NCIMB 13405 / ORS 571)).